A 323-amino-acid chain; its full sequence is Phospho-N-acetylmuramoyl-pentapeptide-transferase (323 aa).

9 helical membrane passes run 12–32, 58–78, 84–104, 120–140, 151–171, 177–197, 200–220, 229–250, and 303–323; these read IVMA…IIIP, PTIG…IMVG, AMIA…DDLL, MILL…YIGT, INFG…VTNA, GLDG…GIIS, LGHI…LAFL, VFMG…ALIL, and KIVS…FASL.

It belongs to the glycosyltransferase 4 family. MraY subfamily. Mg(2+) serves as cofactor.

It is found in the cell membrane. It catalyses the reaction UDP-N-acetyl-alpha-D-muramoyl-L-alanyl-gamma-D-glutamyl-meso-2,6-diaminopimeloyl-D-alanyl-D-alanine + di-trans,octa-cis-undecaprenyl phosphate = di-trans,octa-cis-undecaprenyl diphospho-N-acetyl-alpha-D-muramoyl-L-alanyl-D-glutamyl-meso-2,6-diaminopimeloyl-D-alanyl-D-alanine + UMP. The protein operates within cell wall biogenesis; peptidoglycan biosynthesis. Its function is as follows. Catalyzes the initial step of the lipid cycle reactions in the biosynthesis of the cell wall peptidoglycan: transfers peptidoglycan precursor phospho-MurNAc-pentapeptide from UDP-MurNAc-pentapeptide onto the lipid carrier undecaprenyl phosphate, yielding undecaprenyl-pyrophosphoryl-MurNAc-pentapeptide, known as lipid I. The protein is Phospho-N-acetylmuramoyl-pentapeptide-transferase of Clostridium perfringens (strain ATCC 13124 / DSM 756 / JCM 1290 / NCIMB 6125 / NCTC 8237 / Type A).